Consider the following 431-residue polypeptide: Nuclear envelope integral membrane protein 1 (431 aa).

A signal peptide spans 1-29; the sequence is MAGEVEGEGCRVSWGVLVALLLLPLPSLC. 5 consecutive transmembrane segments (helical) span residues 151 to 171, 175 to 195, 206 to 226, 236 to 256, and 266 to 286; these read PRLF…DTLS, IFYY…ILVF, PFVA…QLVF, YWQY…AFCY, and SINI…YISV. The tract at residues 176 to 287 is a; required for its colocalization with lamins at the nuclear envelope; it reads FYYSTGITVG…GLLLMYISVQ (112 aa). Positions 317-325 match the Nuclear localization signal motif; sequence RKIKLKRGK. The tract at residues 326 to 395 is b; required for interaction with ran; it reads PSPPRLLTEE…LTPNEVSVHE (70 aa). The interval 326–431 is interaction with banf1-a and banf1-b; it reads PSPPRLLTEE…IEPVLYQDLR (106 aa). The interval 368 to 375 is BAF-binding site (BBS); essential for interaction with banf1-a, banf1-b and ran; sequence SRIQSPKR.

Belongs to the NEMP family. As to quaternary structure, homooligomer. Interacts with banf1-a and banf1-b. Interacts with ran-gtp. Phosphorylated.

Its subcellular location is the nucleus inner membrane. It localises to the nucleus envelope. In terms of biological role, in concert with ran, required for proper eye development. May be involved in the expression of early eye marker genes. Contributes to nuclear envelope stiffness in germ cells. Required for fertility. Essential for normal erythropoiesis. Required for efficient nuclear envelope opening and enucleation during the late stages of erythroblast maturation. The polypeptide is Nuclear envelope integral membrane protein 1 (nemp1) (Xenopus tropicalis (Western clawed frog)).